Here is a 403-residue protein sequence, read N- to C-terminus: Na(+)/H(+) antiporter NhaH (403 aa).

12 helical membrane passes run 7 to 27, 34 to 54, 99 to 119, 125 to 145, 168 to 188, 196 to 216, 228 to 245, 250 to 272, 282 to 302, 311 to 331, 345 to 365, and 373 to 393; these read VFIQ…IAKL, VALV…IEEA, LAFL…YFLL, VAFT…LSIF, IAVV…EMGW, FMFL…GYVF, LEVA…FIAE, SGVI…IGMS, FWDS…GLEI, WGYI…AVYI, ILIN…LSLP, and QVLL…GLTL.

It belongs to the monovalent cation:proton antiporter 1 (CPA1) transporter (TC 2.A.36) family.

It localises to the cell membrane. Its function is as follows. Na(+)/H(+) antiporter that extrudes sodium in exchange for external protons. Can also transport lithium. This is Na(+)/H(+) antiporter NhaH (nhaH) from Halobacillus aidingensis.